The primary structure comprises 1009 residues: Epididymis-specific alpha-mannosidase (1009 aa).

Residues 1–23 (MGQLCWLPLLAPLLLLRPPGVQS) form the signal peptide. Zn(2+) is bound by residues His36, Asp38, and Asp151. Asp151 functions as the Nucleophile in the catalytic mechanism. Residues Asn226, Asn249, Asn294, and Asn336 are each glycosylated (N-linked (GlcNAc...) asparagine). Position 420 (His420) interacts with Zn(2+). N-linked (GlcNAc...) asparagine glycosylation is found at Asn516, Asn608, Asn670, Asn675, Asn748, Asn808, Asn812, and Asn890. A disordered region spans residues 972–991 (GPGRHRGDTTSPSRPPGGPI).

Belongs to the glycosyl hydrolase 38 family. Zn(2+) is required as a cofactor.

The protein localises to the secreted. The catalysed reaction is Hydrolysis of terminal, non-reducing alpha-D-mannose residues in alpha-D-mannosides.. This chain is Epididymis-specific alpha-mannosidase (MAN2B2), found in Homo sapiens (Human).